A 382-amino-acid chain; its full sequence is 1-deoxy-D-xylulose 5-phosphate reductoisomerase (382 aa).

Residues Thr-10, Gly-11, Ser-12, Ile-13, Asn-38, and Asn-120 each contribute to the NADPH site. 1-deoxy-D-xylulose 5-phosphate is bound at residue Lys-121. An NADPH-binding site is contributed by Glu-122. Mn(2+) is bound at residue Asp-146. 1-deoxy-D-xylulose 5-phosphate is bound by residues Ser-147, Glu-148, Ser-172, and His-195. Glu-148 serves as a coordination point for Mn(2+). Residue Gly-201 participates in NADPH binding. 1-deoxy-D-xylulose 5-phosphate is bound by residues Ser-208, Asn-213, Lys-214, and Glu-217. Glu-217 contributes to the Mn(2+) binding site.

This sequence belongs to the DXR family. Mg(2+) serves as cofactor. Requires Mn(2+) as cofactor.

The catalysed reaction is 2-C-methyl-D-erythritol 4-phosphate + NADP(+) = 1-deoxy-D-xylulose 5-phosphate + NADPH + H(+). The protein operates within isoprenoid biosynthesis; isopentenyl diphosphate biosynthesis via DXP pathway; isopentenyl diphosphate from 1-deoxy-D-xylulose 5-phosphate: step 1/6. In terms of biological role, catalyzes the NADPH-dependent rearrangement and reduction of 1-deoxy-D-xylulose-5-phosphate (DXP) to 2-C-methyl-D-erythritol 4-phosphate (MEP). The sequence is that of 1-deoxy-D-xylulose 5-phosphate reductoisomerase from Caldanaerobacter subterraneus subsp. tengcongensis (strain DSM 15242 / JCM 11007 / NBRC 100824 / MB4) (Thermoanaerobacter tengcongensis).